The primary structure comprises 90 residues: U7-theraphotoxin-Hhn1a 1 (90 aa).

Positions 1–19 are cleaved as a signal peptide; that stretch reads MKTAIFTVVLALAVFAVLS. A propeptide spanning residues 20-50 is cleaved from the precursor; it reads FGWEANEKALSEEFTELIHEKEAASETEARE. 3 disulfides stabilise this stretch: Cys51–Cys65, Cys58–Cys70, and Cys64–Cys81.

It belongs to the neurotoxin 10 (Hwtx-1) family. 13 (Hntx-13) subfamily. In terms of tissue distribution, expressed by the venom gland.

The protein localises to the secreted. Functionally, ion channel inhibitor. This chain is U7-theraphotoxin-Hhn1a 1, found in Cyriopagopus hainanus (Chinese bird spider).